Here is a 290-residue protein sequence, read N- to C-terminus: Lipoyl synthase 2 (290 aa).

Residues Cys37, Cys42, Cys48, Cys63, Cys67, Cys70, and Ser283 each contribute to the [4Fe-4S] cluster site. Residues 49-272 enclose the Radical SAM core domain; that stretch reads YGQKTATFLL…GNIARELGFS (224 aa).

It belongs to the radical SAM superfamily. Lipoyl synthase family. [4Fe-4S] cluster is required as a cofactor.

Its subcellular location is the cytoplasm. The enzyme catalyses [[Fe-S] cluster scaffold protein carrying a second [4Fe-4S](2+) cluster] + N(6)-octanoyl-L-lysyl-[protein] + 2 oxidized [2Fe-2S]-[ferredoxin] + 2 S-adenosyl-L-methionine + 4 H(+) = [[Fe-S] cluster scaffold protein] + N(6)-[(R)-dihydrolipoyl]-L-lysyl-[protein] + 4 Fe(3+) + 2 hydrogen sulfide + 2 5'-deoxyadenosine + 2 L-methionine + 2 reduced [2Fe-2S]-[ferredoxin]. Its pathway is protein modification; protein lipoylation via endogenous pathway; protein N(6)-(lipoyl)lysine from octanoyl-[acyl-carrier-protein]: step 2/2. Functionally, catalyzes the radical-mediated insertion of two sulfur atoms into the C-6 and C-8 positions of the octanoyl moiety bound to the lipoyl domains of lipoate-dependent enzymes, thereby converting the octanoylated domains into lipoylated derivatives. This Thermosynechococcus vestitus (strain NIES-2133 / IAM M-273 / BP-1) protein is Lipoyl synthase 2.